A 306-amino-acid chain; its full sequence is MFQNATDWTPTSTDPRDEQFGGVVEPVPTPSDADDYDAVLVGEPYDGAVIGRRGARDGPSAIRESLAGVKTHHFDAGAVSGVADLGDVVLPDGDVADTQAAVREAAAEVHETAALPVFVGGDNSLSYANVAPLVAADNGAVGVVSVDAHLDCRAVGDRGPTSGTPYRQLFDAGLDALAVVGARHFETTTTYAGFLRDQGGRIVTSDAVAADRDGSLDAAREALDGVDHVYVSVDIDVLDAAYPGASAPTPGGIQPRELFALVEALAASDDRIRGFELVETAPTLDTGGRTVDAAARTIAHFLAGAQ.

Polar residues predominate over residues 1–13 (MFQNATDWTPTST). The tract at residues 1 to 36 (MFQNATDWTPTSTDPRDEQFGGVVEPVPTPSDADDY) is disordered. Mn(2+)-binding residues include asparagine 123, aspartate 147, histidine 149, aspartate 151, aspartate 234, and aspartate 236.

This sequence belongs to the arginase family. Mn(2+) is required as a cofactor.

It catalyses the reaction N-formimidoyl-L-glutamate + H2O = formamide + L-glutamate. Its pathway is amino-acid degradation; L-histidine degradation into L-glutamate; L-glutamate from N-formimidoyl-L-glutamate (hydrolase route): step 1/1. Its function is as follows. Catalyzes the conversion of N-formimidoyl-L-glutamate to L-glutamate and formamide. This Halobacterium salinarum (strain ATCC 29341 / DSM 671 / R1) protein is Formimidoylglutamase.